Here is a 280-residue protein sequence, read N- to C-terminus: Lacto-N-neotetraose biosynthesis glycosyltransferase LgtE (280 aa).

It belongs to the glycosyltransferase 25 family.

The protein operates within glycan metabolism; lacto-N-neotetraose biosynthesis. Its pathway is bacterial outer membrane biogenesis; lipooligosaccharide biosynthesis. Functionally, adds the first galactose to the lacto-N-tetraose chain in lipooligosaccharide (LOS). The protein is Lacto-N-neotetraose biosynthesis glycosyltransferase LgtE (lgtE) of Neisseria gonorrhoeae.